A 247-amino-acid chain; its full sequence is Probable transcriptional regulatory protein PMT_1423 (247 aa).

This sequence belongs to the TACO1 family.

The protein resides in the cytoplasm. In Prochlorococcus marinus (strain MIT 9313), this protein is Probable transcriptional regulatory protein PMT_1423.